The following is a 292-amino-acid chain: MQQLIEKASTLMEALPYIRRFSGKTIVIKYGGHAMADEKLRKSFALDVILLKYIGINTVVVHGGGPQINETLKRYGIVSEFVKGMRVTDKETMGVVEMVLTGQVNREVVGYINQNGGRAAGLSGKDGDLLICEKLLQEVKSEDGSTETVDIGFVGDVVEVNPAILQALEKGGFIPVIAPVGVGRAGESYNINADVVAGKVAAALNAEKLILLTDVSGVKSKEGELLSSIPLAEVPALIDNGTVTGGMIPKVTCCTDALAAGVKKAHIVDGRIEHAILLEIFTNVGIGTEIQA.

Residues 64-65 (GG), arginine 86, and asparagine 190 each bind substrate.

This sequence belongs to the acetylglutamate kinase family. ArgB subfamily.

It localises to the cytoplasm. It catalyses the reaction N-acetyl-L-glutamate + ATP = N-acetyl-L-glutamyl 5-phosphate + ADP. It functions in the pathway amino-acid biosynthesis; L-arginine biosynthesis; N(2)-acetyl-L-ornithine from L-glutamate: step 2/4. Catalyzes the ATP-dependent phosphorylation of N-acetyl-L-glutamate. This is Acetylglutamate kinase from Geobacter sp. (strain M21).